The sequence spans 887 residues: 3-hydroxy-3-methylglutaryl-coenzyme A reductase (887 aa).

Over 1-9 the chain is Cytoplasmic; it reads MLSRLFRMH. The chain crosses the membrane as a helical span at residues 10 to 39; sequence GLFVASHPWEVIVGTVTLTICMMSMNMFTG. Residues 40 to 56 lie on the Lumenal side of the membrane; the sequence is NNKICGWNYECPKFEED. A helical transmembrane segment spans residues 57–78; it reads VLSSDIIILTITRCIAILYIYF. Residues 61–218 enclose the SSD domain; it reads DIIILTITRC…MTFFPACVSL (158 aa). The short motif at 75 to 78 is the INSIG-binding motif element; that stretch reads YIYF. The Cytoplasmic portion of the chain corresponds to 79–89; the sequence is QFQNLRQLGSK. Residue lysine 89 forms a Glycyl lysine isopeptide (Lys-Gly) (interchain with G-Cter in ubiquitin) linkage. The chain crosses the membrane as a helical span at residues 90–114; it reads YILGIAGLFTIFSSFVFSTVVIHFL. The Lumenal segment spans residues 115 to 123; sequence DKELTGLNE. A helical transmembrane segment spans residues 124 to 149; it reads ALPFFLLLIDLSRASALAKFALSSNS. Residues 150–159 lie on the Cytoplasmic side of the membrane; it reads QDEVRENIAR. Residues 160–187 traverse the membrane as a helical segment; that stretch reads GMAILGPTFTLDALVECLVIGVGTMSGV. At 188 to 191 the chain is on the lumenal side; sequence RQLE. The helical transmembrane segment at 192 to 220 threads the bilayer; the sequence is IMCCFGCMSVLANYFVFMTFFPACVSLVL. The Cytoplasmic segment spans residues 221–248; that stretch reads ELSRESREGRPIWQLSHFARVLEEEENK. Lysine 248 participates in a covalent cross-link: Glycyl lysine isopeptide (Lys-Gly) (interchain with G-Cter in ubiquitin). The helical transmembrane segment at 249–275 threads the bilayer; the sequence is PNPVTQRVKMIMSLGLVLVHAHSRWIA. At 276–314 the chain is on the lumenal side; that stretch reads DPSPQNSTAEQAKVSLGLDEDVSKRIEPSVSLWQFYLSK. An N-linked (GlcNAc...) asparagine glycan is attached at asparagine 281. A helical transmembrane segment spans residues 315-339; the sequence is MISMDIEQVITLSLAFLLAVKYIFF. The Cytoplasmic portion of the chain corresponds to 340–887; that stretch reads EQAETESTLS…LQGTCTKKAA (548 aa). Catalysis depends on charge relay system residues glutamate 558, lysine 690, and aspartate 766. Histidine 865 (proton donor) is an active-site residue. Position 871 is a phosphoserine (serine 871).

This sequence belongs to the HMG-CoA reductase family. As to quaternary structure, homotetramer. Homodimer. Interacts (via its SSD) with INSIG1; the interaction, accelerated by sterols, leads to the recruitment of HMGCR to AMFR/gp78 for its ubiquitination by the sterol-mediated ERAD pathway. Interacts with UBIAD1. Undergoes sterol-mediated ubiquitination and ER-associated degradation (ERAD). Accumulation of sterols in the endoplasmic reticulum (ER) membrane, triggers binding of the reductase to the ER membrane protein INSIG1 or INSIG2. The INSIG1 binding leads to the recruitment of the ubiquitin ligase, AMFR/gp78, RNF139 or RNF145, initiating ubiquitination of the reductase. The ubiquitinated reductase is then extracted from the ER membrane and delivered to cytosolic 26S proteosomes by a mechanism probably mediated by the ATPase Valosin-containing protein VCP/p97. The INSIG2-binding leads to the recruitment of the ubiquitin ligase RNF139, initiating ubiquitination of the reductase. Lys-248 is the main site of ubiquitination. Ubiquitination is enhanced by the presence of a geranylgeranylated protein. In terms of processing, N-glycosylated. Deglycosylated by NGLY1 on release from the endoplasmic reticulum (ER) in a sterol-mediated manner. Post-translationally, phosphorylated. Phosphorylation at Ser-871 reduces the catalytic activity.

The protein localises to the endoplasmic reticulum membrane. It is found in the peroxisome membrane. It carries out the reaction (R)-mevalonate + 2 NADP(+) + CoA = (3S)-3-hydroxy-3-methylglutaryl-CoA + 2 NADPH + 2 H(+). It functions in the pathway metabolic intermediate biosynthesis; (R)-mevalonate biosynthesis; (R)-mevalonate from acetyl-CoA: step 3/3. With respect to regulation, regulated by a negative feedback mechanism through sterols and non-sterol metabolites derived from mevalonate. Phosphorylation at Ser-871 down-regulates the catalytic activity. Its function is as follows. Catalyzes the conversion of (3S)-hydroxy-3-methylglutaryl-CoA (HMG-CoA) to mevalonic acid, the rate-limiting step in the synthesis of cholesterol and other isoprenoids, thus plays a critical role in cellular cholesterol homeostasis. The chain is 3-hydroxy-3-methylglutaryl-coenzyme A reductase (Hmgcr) from Mus musculus (Mouse).